We begin with the raw amino-acid sequence, 1400 residues long: MNQEVMNLFNPQAPAQTFDSIRISIASPEKILSWSYGEIKKPETINYRTFKPERDGLFCARIFGPIKDYECLCGKYKRMKYKGIICEKCGVEVTLSRVRRERMGHIELAAPVAHIWFLKSLPSRIGTLLDMTLKDIERVLYFENYIVTEPGLTSLKEHQLLSEEEYMIAVDEFGEDQFTALIGAEAIYELLASMELEKIAADLRVDLAETTSDLKQKKLMKRLKIVENFLESGNRPEWMIMKIVPVIPPDLRPLVPLDGGRFATSDLNDLYRRVINRNNRLKRLIELRAPGIIIRNEKRMLQEAVDALFDNGRRGRVITGANKRPLKSLSDMLKGKQGRFRQNLLGKRVDYSGRSVIVTGPELKLHQCGLPKKMALELFKPFIYARLDAKGYSSTVKQAKKLVEKERPEVWDILDEVIREHPVLLNRAPTLHRLGIQAFEPTLIEGKAIQLHPLVCTAFNADFDGDQMAVHVPLSLEAQLEARVLMMSTNNILHPANGAPIIVPSQDMVLGLYYLSIVAEKEPGEGMIFADMGELQHALENKVVTLHTKIKGRFKTVDAEGNPVSKIYDTTPGRMIMGELLPKNVNVPFDICNQEMTKKNISKMIDHVYRHCGQKETVIFCDRIMQLGFAHACRAGISFGKDDMVIPESKAKIVAETEALTTEYEQQYNDGLITQGEKYNKVVDAWGKATDKITEEMMARLKAVEFDPVTGRQKQMNSVYMMSHSGARGSVNQMRQLGGMRGLMAKPSGEIIETPIISNFKEGLTVNEYFNSTHGARKGLADTALKTANSGYLTRRLVDVAQDAIISEVDCGAEIGLTMQPIVDAGQIVASIGQRVLGRTALDPILHPVTGEVIVEAGRMVEEKDVEIIEKAGIQSIRIRSALTCETRNGVCAKCYGRDLARGTPVNQGEAVGVIAAQSIGEPGTQLTMRTFHLGGTAQVVDSSYLEASYEGTVKLRNRNVVRNSDGNLVVMGRNMAVLILDATGKERAVHRVTYGSRLFVDEGDTVKRGQRIAEWDPYTRPIMTEVEGYVEFEDLVDGLSVSETADESTGITKRVVIDWRSTPRGSDLKPAMVIKDKAGKILKLSKGGDARFLLSVESILSVEPGAHVKAGDVIARLPMESAKTKDITGGLPRVAELFEARRPKDHAIIAEIDGTVRFGRDYKNKRRIIIEPNDDTIEPVEYLIPKGKPFHLQDGDVIEKGEYILDGNPAPHDILAIKGVEALASYLVNEIQEVYRLQGVLINDKHIEVIVRQMLQKVEITESGDTGYIPGDHVDRIELEEINERLIEEGKKPGSGNPVLLGITKASLQTPSFISAASFQETTRVLTEAAVAGKMDTLQGLKENVIVGRLIPAGTGGMTNQIRRIATARDELIIDERRKTSGSAEANAMLVDMTNNAAE.

Residues Cys-71, Cys-73, Cys-86, and Cys-89 each contribute to the Zn(2+) site. 3 residues coordinate Mg(2+): Asp-462, Asp-464, and Asp-466. Residues Cys-811, Cys-885, Cys-892, and Cys-895 each coordinate Zn(2+).

This sequence belongs to the RNA polymerase beta' chain family. In terms of assembly, the RNAP catalytic core consists of 2 alpha, 1 beta, 1 beta' and 1 omega subunit. When a sigma factor is associated with the core the holoenzyme is formed, which can initiate transcription. It depends on Mg(2+) as a cofactor. Zn(2+) serves as cofactor.

It catalyses the reaction RNA(n) + a ribonucleoside 5'-triphosphate = RNA(n+1) + diphosphate. DNA-dependent RNA polymerase catalyzes the transcription of DNA into RNA using the four ribonucleoside triphosphates as substrates. This Brucella melitensis biotype 1 (strain ATCC 23456 / CCUG 17765 / NCTC 10094 / 16M) protein is DNA-directed RNA polymerase subunit beta'.